The following is a 465-amino-acid chain: CCA-adding enzyme (465 aa).

The ATP site is built by serine 63 and lysine 66. CTP is bound by residues serine 63 and lysine 66. Positions 75, 77, and 127 each coordinate Mg(2+). The ATP site is built by histidine 149, lysine 171, and tyrosine 180. Histidine 149, lysine 171, and tyrosine 180 together coordinate CTP.

The protein belongs to the tRNA nucleotidyltransferase/poly(A) polymerase family. Archaeal CCA-adding enzyme subfamily. Homodimer. Mg(2+) serves as cofactor.

It carries out the reaction a tRNA precursor + 2 CTP + ATP = a tRNA with a 3' CCA end + 3 diphosphate. The enzyme catalyses a tRNA with a 3' CCA end + 2 CTP + ATP = a tRNA with a 3' CCACCA end + 3 diphosphate. In terms of biological role, catalyzes the addition and repair of the essential 3'-terminal CCA sequence in tRNAs without using a nucleic acid template. Adds these three nucleotides in the order of C, C, and A to the tRNA nucleotide-73, using CTP and ATP as substrates and producing inorganic pyrophosphate. tRNA 3'-terminal CCA addition is required both for tRNA processing and repair. Also involved in tRNA surveillance by mediating tandem CCA addition to generate a CCACCA at the 3' terminus of unstable tRNAs. While stable tRNAs receive only 3'-terminal CCA, unstable tRNAs are marked with CCACCA and rapidly degraded. In Aeropyrum pernix (strain ATCC 700893 / DSM 11879 / JCM 9820 / NBRC 100138 / K1), this protein is CCA-adding enzyme.